Reading from the N-terminus, the 179-residue chain is Adenine phosphoribosyltransferase (179 aa).

This sequence belongs to the purine/pyrimidine phosphoribosyltransferase family. Homodimer.

It localises to the cytoplasm. The enzyme catalyses AMP + diphosphate = 5-phospho-alpha-D-ribose 1-diphosphate + adenine. It functions in the pathway purine metabolism; AMP biosynthesis via salvage pathway; AMP from adenine: step 1/1. In terms of biological role, catalyzes a salvage reaction resulting in the formation of AMP, that is energically less costly than de novo synthesis. The sequence is that of Adenine phosphoribosyltransferase from Jannaschia sp. (strain CCS1).